The following is a 337-amino-acid chain: Glycerol-3-phosphate dehydrogenase [NAD(P)+] (337 aa).

Residues W11, R30, and K102 each coordinate NADPH. 3 residues coordinate sn-glycerol 3-phosphate: K102, G138, and S140. A142 contributes to the NADPH binding site. The sn-glycerol 3-phosphate site is built by K193, D246, S256, R257, and N258. K193 serves as the catalytic Proton acceptor. Position 257 (R257) interacts with NADPH. The NADPH site is built by V281 and E283.

It belongs to the NAD-dependent glycerol-3-phosphate dehydrogenase family.

The protein resides in the cytoplasm. It carries out the reaction sn-glycerol 3-phosphate + NAD(+) = dihydroxyacetone phosphate + NADH + H(+). It catalyses the reaction sn-glycerol 3-phosphate + NADP(+) = dihydroxyacetone phosphate + NADPH + H(+). The protein operates within membrane lipid metabolism; glycerophospholipid metabolism. Its function is as follows. Catalyzes the reduction of the glycolytic intermediate dihydroxyacetone phosphate (DHAP) to sn-glycerol 3-phosphate (G3P), the key precursor for phospholipid synthesis. The sequence is that of Glycerol-3-phosphate dehydrogenase [NAD(P)+] from Variovorax paradoxus (strain S110).